The chain runs to 232 residues: 5'-methylthioadenosine/S-adenosylhomocysteine nucleosidase (232 aa).

The active-site Proton acceptor is E12. Substrate contacts are provided by residues G78, I152, and 173-174 (ME). D197 functions as the Proton donor in the catalytic mechanism.

The protein belongs to the PNP/UDP phosphorylase family. MtnN subfamily. Homodimer.

It catalyses the reaction S-adenosyl-L-homocysteine + H2O = S-(5-deoxy-D-ribos-5-yl)-L-homocysteine + adenine. The catalysed reaction is S-methyl-5'-thioadenosine + H2O = 5-(methylsulfanyl)-D-ribose + adenine. The enzyme catalyses 5'-deoxyadenosine + H2O = 5-deoxy-D-ribose + adenine. It participates in amino-acid biosynthesis; L-methionine biosynthesis via salvage pathway; S-methyl-5-thio-alpha-D-ribose 1-phosphate from S-methyl-5'-thioadenosine (hydrolase route): step 1/2. Functionally, catalyzes the irreversible cleavage of the glycosidic bond in both 5'-methylthioadenosine (MTA) and S-adenosylhomocysteine (SAH/AdoHcy) to adenine and the corresponding thioribose, 5'-methylthioribose and S-ribosylhomocysteine, respectively. Also cleaves 5'-deoxyadenosine, a toxic by-product of radical S-adenosylmethionine (SAM) enzymes, into 5-deoxyribose and adenine. Thus, is required for in vivo function of the radical SAM enzymes biotin synthase and lipoic acid synthase, that are inhibited by 5'-deoxyadenosine accumulation. This Salmonella dublin (strain CT_02021853) protein is 5'-methylthioadenosine/S-adenosylhomocysteine nucleosidase.